A 264-amino-acid polypeptide reads, in one-letter code: Virulence plasmid protein pGP3-D (264 aa).

The protein is Virulence plasmid protein pGP3-D of Chlamydia trachomatis serovar L2 (strain ATCC VR-902B / DSM 19102 / 434/Bu).